Here is a 93-residue protein sequence, read N- to C-terminus: Late embryogenesis abundant protein B19.1A (93 aa).

The tract at residues 1 to 93 (MASGQQERSQ…IDESKFKTKS (93 aa)) is disordered. Composition is skewed to basic and acidic residues over residues 9–19 (SQLDRKAREGE) and 73–93 (GGER…KTKS).

It belongs to the small hydrophilic plant seed protein family. Embryos and young seedlings.

Lea proteins are late embryonic proteins abundant in higher plant seed embryos. It may have a role in desiccation tolerance by acting as an osmoprotective protein or as a desiccation-damage repair protein. In Hordeum vulgare (Barley), this protein is Late embryogenesis abundant protein B19.1A (B19.1A).